Here is a 154-residue protein sequence, read N- to C-terminus: Catabolic 3-dehydroquinase (154 aa).

Y25 serves as the catalytic Proton acceptor. Substrate is bound by residues N79, H85, and D92. H105 (proton donor) is an active-site residue. Substrate contacts are provided by residues 106–107 (IS) and R116.

The protein belongs to the type-II 3-dehydroquinase family. In terms of assembly, homododecamer. Adopts a ring-like structure, composed of an arrangement of two hexameric rings stacked on top of one another.

It carries out the reaction 3-dehydroquinate = 3-dehydroshikimate + H2O. It functions in the pathway aromatic compound metabolism; 3,4-dihydroxybenzoate biosynthesis; 3,4-dihydroxybenzoate from 3-dehydroquinate: step 1/2. Functionally, is involved in the catabolism of quinate. Allows the utilization of quinate as carbon source via the beta-ketoadipate pathway. This is Catabolic 3-dehydroquinase from Sclerotinia sclerotiorum (strain ATCC 18683 / 1980 / Ss-1) (White mold).